Reading from the N-terminus, the 414-residue chain is Secernin-1 (414 aa).

Ala-2 carries the post-translational modification N-acetylalanine. Residue Cys-9 is part of the active site.

Belongs to the peptidase C69 family. Secernin subfamily.

It localises to the cytoplasm. Regulates exocytosis in mast cells. Increases both the extent of secretion and the sensitivity of mast cells to stimulation with calcium. The sequence is that of Secernin-1 (SCRN1) from Bos taurus (Bovine).